Reading from the N-terminus, the 619-residue chain is Dihydroxy-acid dehydratase (619 aa).

Position 81 (Asp81) interacts with Mg(2+). [2Fe-2S] cluster is bound at residue Cys122. Residues Asp123 and Lys124 each coordinate Mg(2+). Lys124 carries the post-translational modification N6-carboxylysine. Position 198 (Cys198) interacts with [2Fe-2S] cluster. Position 494 (Glu494) interacts with Mg(2+). The active-site Proton acceptor is Ser520.

This sequence belongs to the IlvD/Edd family. As to quaternary structure, homodimer. [2Fe-2S] cluster serves as cofactor. Mg(2+) is required as a cofactor.

The catalysed reaction is (2R)-2,3-dihydroxy-3-methylbutanoate = 3-methyl-2-oxobutanoate + H2O. It carries out the reaction (2R,3R)-2,3-dihydroxy-3-methylpentanoate = (S)-3-methyl-2-oxopentanoate + H2O. It functions in the pathway amino-acid biosynthesis; L-isoleucine biosynthesis; L-isoleucine from 2-oxobutanoate: step 3/4. Its pathway is amino-acid biosynthesis; L-valine biosynthesis; L-valine from pyruvate: step 3/4. Its function is as follows. Functions in the biosynthesis of branched-chain amino acids. Catalyzes the dehydration of (2R,3R)-2,3-dihydroxy-3-methylpentanoate (2,3-dihydroxy-3-methylvalerate) into 2-oxo-3-methylpentanoate (2-oxo-3-methylvalerate) and of (2R)-2,3-dihydroxy-3-methylbutanoate (2,3-dihydroxyisovalerate) into 2-oxo-3-methylbutanoate (2-oxoisovalerate), the penultimate precursor to L-isoleucine and L-valine, respectively. In Neisseria meningitidis serogroup C / serotype 2a (strain ATCC 700532 / DSM 15464 / FAM18), this protein is Dihydroxy-acid dehydratase.